Reading from the N-terminus, the 262-residue chain is Small ribosomal subunit protein eS1z (262 aa).

Over residues 1–18 the composition is skewed to basic residues; sequence MAVGKNKRISKGRKGGKK. The interval 1–21 is disordered; it reads MAVGKNKRISKGRKGGKKKAV.

It belongs to the eukaryotic ribosomal protein eS1 family. In terms of assembly, component of the small ribosomal subunit. Mature ribosomes consist of a small (40S) and a large (60S) subunit. The 40S subunit contains about 33 different proteins and 1 molecule of RNA (18S). The 60S subunit contains about 49 different proteins and 3 molecules of RNA (25S, 5.8S and 5S).

The protein localises to the cytoplasm. In Arabidopsis thaliana (Mouse-ear cress), this protein is Small ribosomal subunit protein eS1z.